We begin with the raw amino-acid sequence, 344 residues long: Dihydroorotase (344 aa).

Zn(2+) is bound by residues histidine 13 and histidine 15. Substrate contacts are provided by residues 15 to 17 (HLR) and asparagine 41. Zn(2+) is bound by residues lysine 98, histidine 135, and histidine 173. Lysine 98 carries the N6-carboxylysine modification. Position 135 (histidine 135) interacts with substrate. Leucine 218 contributes to the substrate binding site. Aspartate 247 is a binding site for Zn(2+). Residue aspartate 247 is part of the active site. Positions 251 and 263 each coordinate substrate.

The protein belongs to the metallo-dependent hydrolases superfamily. DHOase family. Class II DHOase subfamily. Homodimer. It depends on Zn(2+) as a cofactor.

It carries out the reaction (S)-dihydroorotate + H2O = N-carbamoyl-L-aspartate + H(+). Its pathway is pyrimidine metabolism; UMP biosynthesis via de novo pathway; (S)-dihydroorotate from bicarbonate: step 3/3. Catalyzes the reversible cyclization of carbamoyl aspartate to dihydroorotate. The protein is Dihydroorotase of Neisseria gonorrhoeae (strain ATCC 700825 / FA 1090).